The primary structure comprises 728 residues: Lanosterol synthase (728 aa).

One copy of the PFTB 1 repeat lies at 117–159 (RVEMIRYIVNTAHPVDGGWGLHSVDKSTCFGTTMNYVCLRLLG). D450 serves as the catalytic Proton donor. PFTB repeat units lie at residues 561-602 (ISSA…HTVG) and 611-657 (VKKG…ALIG).

The protein belongs to the terpene cyclase/mutase family.

Its subcellular location is the lipid droplet. It is found in the endoplasmic reticulum membrane. It catalyses the reaction (S)-2,3-epoxysqualene = lanosterol. The protein operates within terpene metabolism; lanosterol biosynthesis; lanosterol from farnesyl diphosphate: step 3/3. Functionally, lanosterol synthase; part of the third module of ergosterol biosynthesis pathway that includes the late steps of the pathway. ERG7 catalyzes the cyclization of (S)-2,3 oxidosqualene to lanosterol, a reaction that forms the sterol core. The third module or late pathway involves the ergosterol synthesis itself through consecutive reactions that mainly occur in the endoplasmic reticulum (ER) membrane. Firstly, the squalene synthase ERG9 catalyzes the condensation of 2 farnesyl pyrophosphate moieties to form squalene, which is the precursor of all steroids. Squalene synthase is crucial for balancing the incorporation of farnesyl diphosphate (FPP) into sterol and nonsterol isoprene synthesis. Secondly, the squalene epoxidase ERG1 catalyzes the stereospecific oxidation of squalene to (S)-2,3-epoxysqualene, which is considered to be a rate-limiting enzyme in steroid biosynthesis. Then, the lanosterol synthase ERG7 catalyzes the cyclization of (S)-2,3 oxidosqualene to lanosterol, a reaction that forms the sterol core. In the next steps, lanosterol is transformed to zymosterol through a complex process involving various demethylation, reduction and desaturation reactions. The lanosterol 14-alpha-demethylase ERG11 (also known as CYP51) catalyzes C14-demethylation of lanosterol to produce 4,4'-dimethyl cholesta-8,14,24-triene-3-beta-ol, which is critical for ergosterol biosynthesis. The C-14 reductase ERG24 reduces the C14=C15 double bond of 4,4-dimethyl-cholesta-8,14,24-trienol to produce 4,4-dimethyl-cholesta-8,24-dienol. 4,4-dimethyl-cholesta-8,24-dienol is substrate of the C-4 demethylation complex ERG25-ERG26-ERG27 in which ERG25 catalyzes the three-step monooxygenation required for the demethylation of 4,4-dimethyl and 4alpha-methylsterols, ERG26 catalyzes the oxidative decarboxylation that results in a reduction of the 3-beta-hydroxy group at the C-3 carbon to an oxo group, and ERG27 is responsible for the reduction of the keto group on the C-3. ERG28 has a role as a scaffold to help anchor ERG25, ERG26 and ERG27 to the endoplasmic reticulum and ERG29 regulates the activity of the iron-containing C4-methylsterol oxidase ERG25. Then, the sterol 24-C-methyltransferase ERG6 catalyzes the methyl transfer from S-adenosyl-methionine to the C-24 of zymosterol to form fecosterol. The C-8 sterol isomerase ERG2 catalyzes the reaction which results in unsaturation at C-7 in the B ring of sterols and thus converts fecosterol to episterol. The sterol-C5-desaturase ERG3 then catalyzes the introduction of a C-5 double bond in the B ring to produce 5-dehydroepisterol. The C-22 sterol desaturase ERG5 further converts 5-dehydroepisterol into ergosta-5,7,22,24(28)-tetraen-3beta-ol by forming the C-22(23) double bond in the sterol side chain. Finally, ergosta-5,7,22,24(28)-tetraen-3beta-ol is substrate of the C-24(28) sterol reductase ERG4 to produce ergosterol. The chain is Lanosterol synthase from Candida albicans (strain SC5314 / ATCC MYA-2876) (Yeast).